We begin with the raw amino-acid sequence, 75 residues long: Dermaseptin-related peptide (75 aa).

The first 22 residues, 1–22, serve as a signal peptide directing secretion; that stretch reads MAFLNKSLLLVLFLGLVSLSIC. Residues 23–43 constitute a propeptide that is removed on maturation; sequence EEERRENEDEEEQEDDEQSEM. Residues 24-44 are disordered; the sequence is EERRENEDEEEQEDDEQSEMR. A compositionally biased stretch (acidic residues) spans 30–40; that stretch reads EDEEEQEDDEQ. A Glutamine amide modification is found at Gln72. Positions 74–75 are excised as a propeptide; it reads EQ.

Expressed by the skin glands.

It is found in the secreted. In terms of biological role, has antibacterial activity against Gram-positive bacterium M.luteus NCT C2665 but not against Gram-negative bacterium E.coli K12D31. This is Dermaseptin-related peptide from Agalychnis callidryas (Red-eyed tree frog).